A 474-amino-acid chain; its full sequence is PRAME family member 7 (474 aa).

The LRR 1; degenerate repeat unit spans residues 97 to 122 (QSKLQVLDLRNVDENFCDIFSGATAS). An LRR 2; degenerate repeat occupies 177–201 (HVCCKELQVFGMPIHSIIEVLNMVE). An LRR 3; degenerate repeat occupies 202–228 (LDCIQEVEVCCPWELSTLVKFAPYLGQ). The stretch at 229-264 (MRNLRKLVLFNIRASACIPPDNKGQFIARFTSQFLK) is one LRR 4; degenerate repeat. 5 LRR repeats span residues 265–290 (LDYF…LRCL), 291–322 (QASL…RQLK), 323–341 (ELDL…PLTG), 347–374 (VATL…VLSR), and 375–399 (CSQL…LLRH).

The protein belongs to the PRAME family.

This Homo sapiens (Human) protein is PRAME family member 7.